We begin with the raw amino-acid sequence, 238 residues long: Leucyl/phenylalanyl-tRNA--protein transferase (238 aa).

It belongs to the L/F-transferase family.

Its subcellular location is the cytoplasm. The enzyme catalyses N-terminal L-lysyl-[protein] + L-leucyl-tRNA(Leu) = N-terminal L-leucyl-L-lysyl-[protein] + tRNA(Leu) + H(+). It carries out the reaction N-terminal L-arginyl-[protein] + L-leucyl-tRNA(Leu) = N-terminal L-leucyl-L-arginyl-[protein] + tRNA(Leu) + H(+). It catalyses the reaction L-phenylalanyl-tRNA(Phe) + an N-terminal L-alpha-aminoacyl-[protein] = an N-terminal L-phenylalanyl-L-alpha-aminoacyl-[protein] + tRNA(Phe). Its function is as follows. Functions in the N-end rule pathway of protein degradation where it conjugates Leu, Phe and, less efficiently, Met from aminoacyl-tRNAs to the N-termini of proteins containing an N-terminal arginine or lysine. The polypeptide is Leucyl/phenylalanyl-tRNA--protein transferase (Pseudoalteromonas translucida (strain TAC 125)).